We begin with the raw amino-acid sequence, 144 residues long: Large ribosomal subunit protein bL31c (144 aa).

The transit peptide at M1–C48 directs the protein to the chloroplast.

The protein belongs to the bacterial ribosomal protein bL31 family. Type A subfamily. Part of the 50S ribosomal subunit.

The protein resides in the plastid. Its subcellular location is the chloroplast. Its function is as follows. Binds the 23S rRNA. This chain is Large ribosomal subunit protein bL31c (RPL31), found in Arabidopsis thaliana (Mouse-ear cress).